Here is a 559-residue protein sequence, read N- to C-terminus: Glycerol kinase (559 aa).

Threonine 20 is an ADP binding site. Threonine 20, serine 21, and serine 22 together coordinate ATP. A sn-glycerol 3-phosphate-binding site is contributed by threonine 20. Residue arginine 24 coordinates ADP. Positions 94, 95, and 148 each coordinate sn-glycerol 3-phosphate. Glycerol is bound by residues arginine 94, glutamate 95, and tyrosine 148. Glycine 252 contributes to the beta-D-fructose 1,6-bisphosphate binding site. Residue aspartate 265 coordinates sn-glycerol 3-phosphate. The glycerol site is built by aspartate 265 and glutamine 266. Residues threonine 287, glycine 332, glycine 433, and asparagine 437 each coordinate ADP. ATP is bound by residues threonine 287, glycine 332, and glycine 433. Glutamate 501 is a Zn(2+) binding site. The chain crosses the membrane as a helical span at residues 532-552 (IFCSLPLGFFIVSSMVMLIGA).

The protein belongs to the FGGY kinase family.

Its subcellular location is the mitochondrion outer membrane. It is found in the nucleus. It localises to the cytoplasm. The protein resides in the cytosol. The enzyme catalyses glycerol + ATP = sn-glycerol 3-phosphate + ADP + H(+). Its pathway is polyol metabolism; glycerol degradation via glycerol kinase pathway; sn-glycerol 3-phosphate from glycerol: step 1/1. Functionally, kinase that plays a key role in glycerol metabolism, catalyzing its phosphorylation to produce sn-glycerol 3-phosphate. Sn-glycerol 3-phosphate is a crucial intermediate in various metabolic pathways, such as the synthesis of glycerolipids and triglycerides, glycogenesis, glycolysis and gluconeogenesis. The sequence is that of Glycerol kinase from Rattus norvegicus (Rat).